Here is a 365-residue protein sequence, read N- to C-terminus: Glycerol dehydrogenase (365 aa).

Asp-37, Gly-94, Lys-95, Thr-116, and Ser-119 together coordinate NAD(+). Asp-121 is a glycerol binding site. Residues Ser-125, Leu-127, and Tyr-131 each coordinate NAD(+). Residues Asp-171, His-254, and His-271 each contribute to the Zn(2+) site. Glycerol is bound at residue His-254.

Belongs to the iron-containing alcohol dehydrogenase family. Requires Zn(2+) as cofactor.

The enzyme catalyses glycerol + NAD(+) = dihydroxyacetone + NADH + H(+). The protein operates within polyol metabolism; glycerol fermentation; glycerone phosphate from glycerol (oxidative route): step 1/2. Its function is as follows. Catalyzes the NAD-dependent oxidation of glycerol to dihydroxyacetone (glycerone). Allows microorganisms to utilize glycerol as a source of carbon under anaerobic conditions. In Pseudomonas putida (Arthrobacter siderocapsulatus), this protein is Glycerol dehydrogenase (gldA).